A 250-amino-acid polypeptide reads, in one-letter code: ATP synthase subunit a (250 aa).

6 helical membrane passes run 31 to 51 (SAYM…GMAG), 85 to 105 (FFPL…IGII), 115 to 135 (LIVT…YGLY), 144 to 164 (LFVP…IEVI), 194 to 214 (FVGM…LPLG), and 217 to 237 (VAVT…FTIL).

This sequence belongs to the ATPase A chain family. F-type ATPases have 2 components, CF(1) - the catalytic core - and CF(0) - the membrane proton channel. CF(1) has five subunits: alpha(3), beta(3), gamma(1), delta(1), epsilon(1). CF(0) has four main subunits: a, b, b' and c.

The protein resides in the cell inner membrane. Key component of the proton channel; it plays a direct role in the translocation of protons across the membrane. In Rhodopseudomonas palustris (strain BisB5), this protein is ATP synthase subunit a.